The sequence spans 452 residues: NADH-cytochrome b5 reductase-like protein alnC (452 aa).

The region spanning 4-80 (PASITLAEVA…LKTLLVGSLQ (77 aa)) is the Cytochrome b5 heme-binding domain. Residue 33 to 38 (AEYRED) participates in FMN binding. Positions 39 and 63 each coordinate heme. FMN is bound by residues 80 to 83 (QSKT) and 116 to 125 (NDTSKYGQLP). 2 helical membrane passes run 120–140 (KYGQ…FFTL) and 166–186 (VGFL…ATFV). Residues 225 to 324 (NTQQFLTLVD…RGPFGRYSPS (100 aa)) enclose the FAD-binding FR-type domain. 302-305 (YLLN) serves as a coordination point for FAD. NADP(+) is bound by residues 389–390 (GQ) and 395–399 (WKGLR).

Belongs to the flavoprotein pyridine nucleotide cytochrome reductase family. The cofactor is FAD. It depends on FMN as a cofactor.

It is found in the membrane. It functions in the pathway polyketide biosynthesis. NADH-cytochrome b5 reductase-like protein; part of the gene cluster that mediates the biosynthesis of asperlin, a polyketide showing anti-inflammatory, antitumor and antibiotic activities. The first step of the asperlin biosynthesis is the production of the intermediate 2,4,6-octatrienoic acid by the highly redusing polyketide synthase alnA with cleavage of the PKS product by the esterase alnB. 2,4,6-octatrienoic acid is further converted to asperlin via several steps involving the remaining enzymes from the cluster. The sequence is that of NADH-cytochrome b5 reductase-like protein alnC from Emericella nidulans (strain FGSC A4 / ATCC 38163 / CBS 112.46 / NRRL 194 / M139) (Aspergillus nidulans).